The chain runs to 183 residues: ATP synthase subunit b, chloroplastic (183 aa).

The chain crosses the membrane as a helical span at residues 27-49 (LATNLINLTVVVGVLIFFGKGVL).

This sequence belongs to the ATPase B chain family. F-type ATPases have 2 components, F(1) - the catalytic core - and F(0) - the membrane proton channel. F(1) has five subunits: alpha(3), beta(3), gamma(1), delta(1), epsilon(1). F(0) has four main subunits: a(1), b(1), b'(1) and c(10-14). The alpha and beta chains form an alternating ring which encloses part of the gamma chain. F(1) is attached to F(0) by a central stalk formed by the gamma and epsilon chains, while a peripheral stalk is formed by the delta, b and b' chains.

The protein localises to the plastid. It is found in the chloroplast thylakoid membrane. In terms of biological role, f(1)F(0) ATP synthase produces ATP from ADP in the presence of a proton or sodium gradient. F-type ATPases consist of two structural domains, F(1) containing the extramembraneous catalytic core and F(0) containing the membrane proton channel, linked together by a central stalk and a peripheral stalk. During catalysis, ATP synthesis in the catalytic domain of F(1) is coupled via a rotary mechanism of the central stalk subunits to proton translocation. Its function is as follows. Component of the F(0) channel, it forms part of the peripheral stalk, linking F(1) to F(0). This chain is ATP synthase subunit b, chloroplastic, found in Lolium perenne (Perennial ryegrass).